The following is a 210-amino-acid chain: Ion-translocating oxidoreductase complex subunit G (210 aa).

Residues Ser-9–Leu-29 form a helical membrane-spanning segment. FMN phosphoryl threonine is present on Thr-176.

It belongs to the RnfG family. In terms of assembly, the complex is composed of six subunits: RnfA, RnfB, RnfC, RnfD, RnfE and RnfG. The cofactor is FMN.

It localises to the cell inner membrane. In terms of biological role, part of a membrane-bound complex that couples electron transfer with translocation of ions across the membrane. This chain is Ion-translocating oxidoreductase complex subunit G, found in Aliivibrio fischeri (strain ATCC 700601 / ES114) (Vibrio fischeri).